A 410-amino-acid polypeptide reads, in one-letter code: Sprouty-related, EVH1 domain-containing protein 2 (410 aa).

The 118-residue stretch at 5-122 folds into the WH1 domain; that stretch reads THPDDDSYIV…RGVRKAIEDL (118 aa). The segment at 127 to 171 is disordered; that stretch reads TTSSSTIHNEAELGDDDVFTTATDSSSNSSQKREPNTRTISSPTS. Polar residues predominate over residues 146-156; it reads TTATDSSSNSS. In terms of domain architecture, KBD spans 197 to 252; it reads SYPQVTFPEDDEEIVRINPREKIWMTGYEDYRHAPVRGKYLDSTEDADSYVRFAKG. Tyr-224 and Tyr-227 each carry phosphotyrosine. Positions 274–294 are disordered; it reads DPKGNVIKTQPPRAKSRRRKE. The 109-residue stretch at 300–408 folds into the SPR domain; it reads RCVYCRDMFN…CRCCGGKHKA (109 aa).

Homodimer and heterodimer. Able to interact with SPRED1 to form heterodimers. Interacts with RAS. May interact with ZDHHC13 (via ANK repeats) and ZDHHC17 (via ANK repeats). Interacts with TESK1. Interacts with NF1. Phosphorylated on serine and threonine residues. Phosphorylated on tyrosine. Phosphorylation of Tyr-224 and Tyr-227 are required for ubiquitination. In terms of processing, ubiquitinated; leading to degradation by the proteasome. As to expression, expressed in the eye, with higher expression in lens epithelium than in lens fiber cells at postnatal day 15.

It localises to the cell membrane. It is found in the cytoplasmic vesicle. The protein resides in the secretory vesicle membrane. The protein localises to the cytoplasm. Negatively regulates Ras signaling pathways and downstream activation of MAP kinases. Recruits and translocates NF1 to the cell membrane, thereby enabling NF1-dependent hydrolysis of active GTP-bound Ras to inactive GDP-bound Ras. Inhibits fibroblast growth factor (FGF)-induced retinal lens fiber differentiation, probably by inhibiting FGF-mediated phosphorylation of ERK1/2. Inhibits TGFB-induced epithelial-to-mesenchymal transition in lens epithelial cells. The chain is Sprouty-related, EVH1 domain-containing protein 2 (Spred2) from Rattus norvegicus (Rat).